Consider the following 71-residue polypeptide: UPF0435 protein RBAM_008100 (71 aa).

This sequence belongs to the UPF0435 family.

This is UPF0435 protein RBAM_008100 from Bacillus velezensis (strain DSM 23117 / BGSC 10A6 / LMG 26770 / FZB42) (Bacillus amyloliquefaciens subsp. plantarum).